A 193-amino-acid polypeptide reads, in one-letter code: Peptidyl-tRNA hydrolase (193 aa).

Tyrosine 17 is a tRNA binding site. Histidine 22 serves as the catalytic Proton acceptor. 3 residues coordinate tRNA: tyrosine 69, asparagine 71, and asparagine 117.

This sequence belongs to the PTH family. As to quaternary structure, monomer.

Its subcellular location is the cytoplasm. The enzyme catalyses an N-acyl-L-alpha-aminoacyl-tRNA + H2O = an N-acyl-L-amino acid + a tRNA + H(+). Hydrolyzes ribosome-free peptidyl-tRNAs (with 1 or more amino acids incorporated), which drop off the ribosome during protein synthesis, or as a result of ribosome stalling. Functionally, catalyzes the release of premature peptidyl moieties from peptidyl-tRNA molecules trapped in stalled 50S ribosomal subunits, and thus maintains levels of free tRNAs and 50S ribosomes. This is Peptidyl-tRNA hydrolase from Leifsonia xyli subsp. xyli (strain CTCB07).